The sequence spans 195 residues: Exosome complex component CSL4 (195 aa).

Residues serine 21 and serine 98 each carry the phosphoserine modification. An S1 motif domain is found at 66–147; that stretch reads DVGAIVTCKV…AQSNYLLTTA (82 aa).

The protein belongs to the CSL4 family. As to quaternary structure, component of the RNA exosome core complex (Exo-9), composed of EXOSC1, EXOSC2, EXOSC3, EXOSC4, EXOSC5, EXOSC6, EXOSC7, EXOSC8 and EXOSC9; within the complex interacts with EXOSC6. The catalytically inactive RNA exosome core complex (Exo-9) associates with the catalytic subunit EXOSC10/RRP6. Exo-9 may associate with DIS3 to form the nucleolar exosome complex, or DIS3L to form the cytoplasmic exosome complex. Exo-9 is formed by a hexameric base ring consisting of the heterodimers EXOSC4-EXOSC9, EXOSC5-EXOSC8 and EXOSC6-EXOSC7, and a cap ring consisting of EXOSC1, EXOSC2 and EXOSC3. The RNA exosome complex associates with cofactors C1D/RRP47, MPHOSPH6/MPP6 and MTREX/MTR4. Interacts with DDX60.

It is found in the nucleus. The protein resides in the nucleolus. The protein localises to the cytoplasm. Non-catalytic component of the RNA exosome complex which has 3'-&gt;5' exoribonuclease activity and participates in a multitude of cellular RNA processing and degradation events. In the nucleus, the RNA exosome complex is involved in proper maturation of stable RNA species such as rRNA, snRNA and snoRNA, in the elimination of RNA processing by-products and non-coding 'pervasive' transcripts, such as antisense RNA species and promoter-upstream transcripts (PROMPTs), and of mRNAs with processing defects, thereby limiting or excluding their export to the cytoplasm. The RNA exosome may be involved in Ig class switch recombination (CSR) and/or Ig variable region somatic hypermutation (SHM) by targeting AICDA deamination activity to transcribed dsDNA substrates. In the cytoplasm, the RNA exosome complex is involved in general mRNA turnover and specifically degrades inherently unstable mRNAs containing AU-rich elements (AREs) within their 3' untranslated regions, and in RNA surveillance pathways, preventing translation of aberrant mRNAs. It seems to be involved in degradation of histone mRNA. The catalytic inactive RNA exosome core complex of 9 subunits (Exo-9) is proposed to play a pivotal role in the binding and presentation of RNA for ribonucleolysis, and to serve as a scaffold for the association with catalytic subunits and accessory proteins or complexes. EXOSC1 as peripheral part of the Exo-9 complex stabilizes the hexameric ring of RNase PH-domain subunits through contacts with EXOSC6 and EXOSC8. The polypeptide is Exosome complex component CSL4 (EXOSC1) (Homo sapiens (Human)).